A 220-amino-acid polypeptide reads, in one-letter code: Putative NAD(P)H nitroreductase SERP2086 (220 aa).

It belongs to the nitroreductase family. It depends on FMN as a cofactor.

In Staphylococcus epidermidis (strain ATCC 35984 / DSM 28319 / BCRC 17069 / CCUG 31568 / BM 3577 / RP62A), this protein is Putative NAD(P)H nitroreductase SERP2086.